The primary structure comprises 469 residues: Probable indole-3-acetic acid-amido synthetase GH3.13 (469 aa).

A disordered region spans residues 1–26; it reads MTSTSSENAPDHDHDHDASSPAPATA. Residues 9-18 are compositionally biased toward basic and acidic residues; sequence APDHDHDHDA.

Belongs to the IAA-amido conjugating enzyme family.

Functionally, may catalyze the synthesis of indole-3-acetic acid (IAA)-amino acid conjugates, providing a mechanism for the plant to cope with the presence of excess auxin. This chain is Probable indole-3-acetic acid-amido synthetase GH3.13 (GH3.13), found in Oryza sativa subsp. japonica (Rice).